The primary structure comprises 182 residues: Isopentenyl-diphosphate Delta-isomerase (182 aa).

The Mn(2+) site is built by H25 and H32. The 135-residue stretch at L30–M164 folds into the Nudix hydrolase domain. The active site involves C67. H69 serves as a coordination point for Mn(2+). E87 contacts Mg(2+). Mn(2+) is bound by residues E114 and E116. Residue E116 is part of the active site.

This sequence belongs to the IPP isomerase type 1 family. Homodimer. Mg(2+) is required as a cofactor. Requires Mn(2+) as cofactor.

The protein localises to the cytoplasm. The catalysed reaction is isopentenyl diphosphate = dimethylallyl diphosphate. The protein operates within isoprenoid biosynthesis; dimethylallyl diphosphate biosynthesis; dimethylallyl diphosphate from isopentenyl diphosphate: step 1/1. In terms of biological role, catalyzes the 1,3-allylic rearrangement of the homoallylic substrate isopentenyl (IPP) to its highly electrophilic allylic isomer, dimethylallyl diphosphate (DMAPP). The polypeptide is Isopentenyl-diphosphate Delta-isomerase (Shigella boydii serotype 18 (strain CDC 3083-94 / BS512)).